A 1637-amino-acid chain; its full sequence is Probable serine/threonine-protein kinase gdt2 (1637 aa).

A signal peptide spans 1–19 (MNYILYILLILIIFSINNT). The Extracellular segment spans residues 20-896 (FSIGSFVYTP…IPVEKINLLP (877 aa)). Residues 897-917 (IIVPICVTVLVLLSILIVFFG) traverse the membrane as a helical segment. Over 918 to 1637 (ARYYKHKKRR…NNNNNNNNNN (720 aa)) the chain is Cytoplasmic. Polar residues predominate over residues 977–990 (SDIQTQSENNNLEP). The disordered stretch occupies residues 977 to 1000 (SDIQTQSENNNLEPTTVETTTTTT). A compositionally biased stretch (low complexity) spans 991–1000 (TTVETTTTTT). The 258-residue stretch at 1290–1547 (IIIKNYISEG…LSKYLKHLLK (258 aa)) folds into the Protein kinase domain. Residues 1296–1304 (ISEGTFGIV) and K1317 contribute to the ATP site. D1408 serves as the catalytic Proton acceptor. Residues 1557–1637 (DKDKKNKKKN…NNNNNNNNNN (81 aa)) form a disordered region. Composition is skewed to low complexity over residues 1568 to 1589 (NNNNNNNNNNNNNNNNNNNNNN) and 1597 to 1637 (NNNI…NNNN).

The protein in the N-terminal section; belongs to the GDT family. This sequence in the C-terminal section; belongs to the protein kinase superfamily. TKL Ser/Thr protein kinase family.

The protein localises to the membrane. It carries out the reaction L-seryl-[protein] + ATP = O-phospho-L-seryl-[protein] + ADP + H(+). It catalyses the reaction L-threonyl-[protein] + ATP = O-phospho-L-threonyl-[protein] + ADP + H(+). Regulates the transition between growth and differentiation. The polypeptide is Probable serine/threonine-protein kinase gdt2 (gdt2) (Dictyostelium discoideum (Social amoeba)).